A 285-amino-acid polypeptide reads, in one-letter code: Urease accessory protein UreD 1 (285 aa).

The protein belongs to the UreD family. In terms of assembly, ureD, UreF and UreG form a complex that acts as a GTP-hydrolysis-dependent molecular chaperone, activating the urease apoprotein by helping to assemble the nickel containing metallocenter of UreC. The UreE protein probably delivers the nickel.

The protein localises to the cytoplasm. Its function is as follows. Required for maturation of urease via the functional incorporation of the urease nickel metallocenter. The sequence is that of Urease accessory protein UreD 1 from Pseudomonas syringae pv. tomato (strain ATCC BAA-871 / DC3000).